We begin with the raw amino-acid sequence, 92 residues long: Neurophysin 2 (92 aa).

7 disulfide bridges follow: C7-C51, C10-C24, C18-C41, C25-C31, C58-C70, C64-C82, and C71-C76.

It belongs to the vasopressin/oxytocin family.

The protein resides in the secreted. Functionally, neurophysin 2 specifically binds the midbrain peptide hormone vasopressin. The sequence is that of Neurophysin 2 (AVP) from Equus caballus (Horse).